Here is a 435-residue protein sequence, read N- to C-terminus: Glutamyl-tRNA reductase (435 aa).

Substrate-binding positions include 50–53 (TCNR), Ser-110, 115–117 (ETQ), and Gln-121. Catalysis depends on Cys-51, which acts as the Nucleophile. Position 189 to 194 (189 to 194 (GAGEMS)) interacts with NADP(+).

It belongs to the glutamyl-tRNA reductase family. Homodimer.

It catalyses the reaction (S)-4-amino-5-oxopentanoate + tRNA(Glu) + NADP(+) = L-glutamyl-tRNA(Glu) + NADPH + H(+). It participates in porphyrin-containing compound metabolism; protoporphyrin-IX biosynthesis; 5-aminolevulinate from L-glutamyl-tRNA(Glu): step 1/2. Catalyzes the NADPH-dependent reduction of glutamyl-tRNA(Glu) to glutamate 1-semialdehyde (GSA). This Campylobacter lari (strain RM2100 / D67 / ATCC BAA-1060) protein is Glutamyl-tRNA reductase.